The chain runs to 339 residues: Phosphate acyltransferase (339 aa).

This sequence belongs to the PlsX family. Homodimer. Probably interacts with PlsY.

The protein resides in the cytoplasm. It catalyses the reaction a fatty acyl-[ACP] + phosphate = an acyl phosphate + holo-[ACP]. The protein operates within lipid metabolism; phospholipid metabolism. Catalyzes the reversible formation of acyl-phosphate (acyl-PO(4)) from acyl-[acyl-carrier-protein] (acyl-ACP). This enzyme utilizes acyl-ACP as fatty acyl donor, but not acyl-CoA. The chain is Phosphate acyltransferase from Moorella thermoacetica (strain ATCC 39073 / JCM 9320).